Here is a 176-residue protein sequence, read N- to C-terminus: Large ribosomal subunit protein bL28m (176 aa).

Residues 1-8 (MASKLLRK) constitute a mitochondrion transit peptide.

The protein belongs to the bacterial ribosomal protein bL28 family. Component of the mitochondrial large ribosomal subunit (mt-LSU). Mature yeast 74S mitochondrial ribosomes consist of a small (37S) and a large (54S) subunit. The 37S small subunit contains a 15S ribosomal RNA (15S mt-rRNA) and at least 32 different proteins. The 54S large subunit contains a 21S rRNA (21S mt-rRNA) and at least 45 different proteins.

It localises to the cytoplasm. It is found in the mitochondrion. Its function is as follows. Component of the mitochondrial ribosome (mitoribosome), a dedicated translation machinery responsible for the synthesis of mitochondrial genome-encoded proteins, including at least some of the essential transmembrane subunits of the mitochondrial respiratory chain. The mitoribosomes are attached to the mitochondrial inner membrane and translation products are cotranslationally integrated into the membrane. The protein is Large ribosomal subunit protein bL28m (mrpl24) of Schizosaccharomyces pombe (strain 972 / ATCC 24843) (Fission yeast).